The sequence spans 248 residues: 26.2 kDa heat shock protein, mitochondrial (248 aa).

The transit peptide at 1–32 (MASTVALKGRPLATLLRQLLAADAPPAATGRP) directs the protein to the mitochondrion. Residues 26–48 (PAATGRPVAAAPAASGKPVTAPA) are disordered. The region spanning 139-248 (ATAAARRGGW…RKDVFQVNVE (110 aa)) is the sHSP domain.

It belongs to the small heat shock protein (HSP20) family. In terms of assembly, may form oligomeric structures.

It is found in the mitochondrion. The chain is 26.2 kDa heat shock protein, mitochondrial (HSP26.2) from Oryza sativa subsp. japonica (Rice).